We begin with the raw amino-acid sequence, 186 residues long: Tegument protein UL55 (186 aa).

Belongs to the alphaherpesvirinae HHV-1 UL55 family.

Its subcellular location is the virion tegument. It is found in the host nucleus matrix. This chain is Tegument protein UL55, found in Homo sapiens (Human).